Consider the following 347-residue polypeptide: DNA-directed RNA polymerase subunit alpha (347 aa).

Residues 1-243 (MLIKQGDRLI…DQISVFINFD (243 aa)) form an alpha N-terminal domain (alpha-NTD) region. The interval 260 to 347 (FNEHLFKSID…EWKRKQQHEA (88 aa)) is alpha C-terminal domain (alpha-CTD).

This sequence belongs to the RNA polymerase alpha chain family. In terms of assembly, homodimer. The RNAP catalytic core consists of 2 alpha, 1 beta, 1 beta' and 1 omega subunit. When a sigma factor is associated with the core the holoenzyme is formed, which can initiate transcription.

It carries out the reaction RNA(n) + a ribonucleoside 5'-triphosphate = RNA(n+1) + diphosphate. In terms of biological role, DNA-dependent RNA polymerase catalyzes the transcription of DNA into RNA using the four ribonucleoside triphosphates as substrates. The protein is DNA-directed RNA polymerase subunit alpha of Nitratidesulfovibrio vulgaris (strain ATCC 29579 / DSM 644 / CCUG 34227 / NCIMB 8303 / VKM B-1760 / Hildenborough) (Desulfovibrio vulgaris).